Consider the following 386-residue polypeptide: Patatin (386 aa).

A signal peptide spans 1–23 (MATTKSFLILFFMILATTSSTCA). The PNPLA domain occupies 32-229 (LSIDGGGIKG…TVGDPALLSL (198 aa)). The GXGXXG motif lies at 36-41 (GGGIKG). Positions 75 to 79 (GTSTG) match the GXSXG motif. Serine 77 acts as the Nucleophile in catalysis. A glycan (N-linked (GlcNAc...) asparagine) is linked at asparagine 115. Catalysis depends on aspartate 215, which acts as the Proton acceptor. The short motif at 215 to 217 (DGA) is the DGA/G element.

The protein belongs to the patatin family.

It is found in the vacuole. Probable lipolytic acyl hydrolase (LAH), an activity which is thought to be involved in the response of tubers to pathogens. The sequence is that of Patatin from Solanum tuberosum (Potato).